Consider the following 444-residue polypeptide: MREILHIQGGQCGNQIGAKFWEVICDEHGVDATGRYAGDSDLQLERINVYYNEASGGRYVPRAVLMDLEPGTMDSVRSGPFGQIFRPDNFVFGQSGAGNNWAKGHYTEGAELIDSVLDVVRKEAENCDCLQGFQVCHSLGGGTGSGMGTLLISKIREEYPDRMMLTFSVFPSPKVSDTVVEPYNATLSVHQLVENADECMVLDNEALYDICFRTLKLATPTFGDLNHLISATMSGVTCCLRFPGQLNSDLRKLAVNLIPFPRLHFFMVGFAPLTSRGSQQYRALTVPELTQQMWDAKNMMCAADPRHGRYLTASAMFRGKMSTKEVDEQMLNVQNKNSSYFVEWIPNNVKSSVCDIPPRGLKMAATFVGNSTSIQEMFRRVSEQFTAMFRRKAFLHWYTGEGMDEMEFTEAESNMNDLVAEYQQYQDATADEEYEDEEEEAEAE.

8 residues coordinate GTP: glutamine 11, glutamate 69, serine 138, glycine 142, threonine 143, glycine 144, asparagine 204, and asparagine 226. Mg(2+) is bound at residue glutamate 69.

This sequence belongs to the tubulin family. As to quaternary structure, dimer of alpha and beta chains. A typical microtubule is a hollow water-filled tube with an outer diameter of 25 nm and an inner diameter of 15 nM. Alpha-beta heterodimers associate head-to-tail to form protofilaments running lengthwise along the microtubule wall with the beta-tubulin subunit facing the microtubule plus end conferring a structural polarity. Microtubules usually have 13 protofilaments but different protofilament numbers can be found in some organisms and specialized cells. Mg(2+) serves as cofactor. Expressed in roots, leaf sheaths, and suspension cultured cells.

The protein localises to the cytoplasm. It is found in the cytoskeleton. Tubulin is the major constituent of microtubules, a cylinder consisting of laterally associated linear protofilaments composed of alpha- and beta-tubulin heterodimers. Microtubules grow by the addition of GTP-tubulin dimers to the microtubule end, where a stabilizing cap forms. Below the cap, tubulin dimers are in GDP-bound state, owing to GTPase activity of alpha-tubulin. The chain is Tubulin beta-7 chain (TUBB7) from Oryza sativa subsp. japonica (Rice).